The primary structure comprises 598 residues: Probable translation initiation factor IF-2 (598 aa).

A tr-type G domain is found at 3–225 (LRCPIVSVLG…GLAQKFLEQK (223 aa)). Residues 12-19 (GHVDHGKT) are G1. 12-19 (GHVDHGKT) contacts GTP. The interval 37-41 (GITQH) is G2. The G3 stretch occupies residues 76-79 (DTPG). GTP is bound by residues 76 to 80 (DTPGH) and 130 to 133 (NKVD). The interval 130–133 (NKVD) is G4. The interval 200–202 (SAM) is G5.

The protein belongs to the TRAFAC class translation factor GTPase superfamily. Classic translation factor GTPase family. IF-2 subfamily.

Its function is as follows. Function in general translation initiation by promoting the binding of the formylmethionine-tRNA to ribosomes. Seems to function along with eIF-2. In Methanococcus maripaludis (strain C7 / ATCC BAA-1331), this protein is Probable translation initiation factor IF-2.